The primary structure comprises 152 residues: UPF0178 protein YaiI (152 aa).

Belongs to the UPF0178 family.

This Escherichia coli O6:K15:H31 (strain 536 / UPEC) protein is UPF0178 protein YaiI.